The sequence spans 96 residues: Xylulose kinase (96 aa).

A substrate-binding site is contributed by 71-72 (QH).

Belongs to the FGGY kinase family.

It catalyses the reaction D-xylulose + ATP = D-xylulose 5-phosphate + ADP + H(+). Catalyzes the phosphorylation of D-xylulose to D-xylulose 5-phosphate. The protein is Xylulose kinase of Arthrobacter sp. (strain NRRL B3728).